Here is a 434-residue protein sequence, read N- to C-terminus: MRVVILGSGVVGVTSAWYLAKEGHDVTVIDRQDGPAQETSAGNAGQISPGYAAPWAAPGVPLKAIKWMFQRHAPLAIRLDGSSLQLRWMWQMLRNCDTSHYMVNKSRMVRLAEYSRDCLKDLRAATGIQYEGRQGGTLQLFRTEQQFDNAAKDIAVLDDAGVPYSLLTAEQLATVEPALAKVAHKLTGGLRLPNDETGDCKLFTERLAKMAEQAGVKFIFNRSVDKLLVEGDQIAGVLCGDDIIKADAYVVAFGAYSTALLAGLVSIPVYPLKGYSLTIPITDPASAPFSTVLDETYKIAITRFDDRIRVGGMAEIVGFNTQLAPARRETLEMVVRDLYPHGGDISQAVFWSGLRPMTPDGTPIVGRTPLKNLYLNTGHGTLGWTMACGSGQLLADIIQGRRPAIVADDLSVARYRAGFQPLNIAPLHDIHPIR.

Position 3-17 (3-17) interacts with FAD; the sequence is VVILGSGVVGVTSAW.

Belongs to the DadA oxidoreductase family. The cofactor is FAD.

It carries out the reaction a D-alpha-amino acid + A + H2O = a 2-oxocarboxylate + AH2 + NH4(+). Its pathway is amino-acid degradation; D-alanine degradation; NH(3) and pyruvate from D-alanine: step 1/1. Its function is as follows. Oxidative deamination of D-amino acids. In Yersinia pseudotuberculosis serotype O:1b (strain IP 31758), this protein is D-amino acid dehydrogenase.